The following is a 298-amino-acid chain: uncharacterized protein (298 aa).

This is an uncharacterized protein from Archaeoglobus fulgidus (strain ATCC 49558 / DSM 4304 / JCM 9628 / NBRC 100126 / VC-16).